The chain runs to 342 residues: Heat-inducible transcription repressor HrcA (342 aa).

It belongs to the HrcA family.

In terms of biological role, negative regulator of class I heat shock genes (grpE-dnaK-dnaJ and groELS operons). Prevents heat-shock induction of these operons. This chain is Heat-inducible transcription repressor HrcA, found in Shouchella clausii (strain KSM-K16) (Alkalihalobacillus clausii).